Consider the following 170-residue polypeptide: Putative beta-eliminating lyase-like protein (170 aa).

Lys32 carries the N6-(pyridoxal phosphate)lysine modification.

Belongs to the beta-eliminating lyase family. It depends on pyridoxal 5'-phosphate as a cofactor.

This is Putative beta-eliminating lyase-like protein from Dictyostelium discoideum (Social amoeba).